Consider the following 811-residue polypeptide: Glycerol-3-phosphate acyltransferase (811 aa).

An HXXXXD motif motif is present at residues 303–308 (CHRSHM).

Belongs to the GPAT/DAPAT family.

Its subcellular location is the cell inner membrane. The enzyme catalyses sn-glycerol 3-phosphate + an acyl-CoA = a 1-acyl-sn-glycero-3-phosphate + CoA. The protein operates within phospholipid metabolism; CDP-diacylglycerol biosynthesis; CDP-diacylglycerol from sn-glycerol 3-phosphate: step 1/3. This Glaesserella parasuis serovar 5 (strain SH0165) (Haemophilus parasuis) protein is Glycerol-3-phosphate acyltransferase.